The chain runs to 562 residues: Matrix metalloproteinase-25 (562 aa).

The N-terminal stretch at M1 to A21 is a signal peptide. The propeptide occupies P22–R107. The Cysteine switch motif lies at P88 to V95. Zn(2+)-binding residues include C90 and H233. E234 is an active-site residue. Zn(2+)-binding residues include H237 and H243. The tract at residues L278 to I313 is disordered. Pro residues predominate over residues L295–S304. Hemopexin repeat units lie at residues P314–L363, V367–P412, G413–P461, and P462–C508. Cysteines 317 and 508 form a disulfide. The segment at S490–V526 is disordered. Residue A539 is the site of GPI-anchor amidated alanine attachment. The propeptide at A540–R562 is removed in mature form.

The protein belongs to the peptidase M10A family. Zn(2+) serves as cofactor. The cofactor is Ca(2+). Post-translationally, the precursor is cleaved by a furin endopeptidase. In terms of tissue distribution, expressed predominantly in leukocytes, lung and spleen. Expressed also in colon carcinoma, astrocytoma and glioblastomas.

It localises to the cell membrane. The protein localises to the secreted. The protein resides in the extracellular space. Its subcellular location is the extracellular matrix. Functionally, may activate progelatinase A. The protein is Matrix metalloproteinase-25 (MMP25) of Homo sapiens (Human).